Here is a 231-residue protein sequence, read N- to C-terminus: Flagellar L-ring protein (231 aa).

Positions 1–18 (MNRLMIVSLLGIATALGG) are cleaved as a signal peptide. A lipid anchor (N-palmitoyl cysteine) is attached at Cys19. A lipid anchor (S-diacylglycerol cysteine) is attached at Cys19. Residues 118–141 (LSLSAEYGGSRDAKGDSQAGQSNS) are disordered.

Belongs to the FlgH family. In terms of assembly, the basal body constitutes a major portion of the flagellar organelle and consists of four rings (L,P,S, and M) mounted on a central rod.

The protein resides in the cell outer membrane. The protein localises to the bacterial flagellum basal body. In terms of biological role, assembles around the rod to form the L-ring and probably protects the motor/basal body from shearing forces during rotation. This chain is Flagellar L-ring protein, found in Pseudomonas aeruginosa (strain UCBPP-PA14).